A 667-amino-acid polypeptide reads, in one-letter code: WD40 repeat-containing protein DDB_G0271002 (667 aa).

WD repeat units follow at residues 165 to 204 (NHGVSTWGIAICPSKPLIAVSSNSHKITIWNLDDENPQET) and 210 to 249 (KHKHNIPSIDFSPCGNYLVSVSIDKNIRIWDVNKRQLLRI). Low complexity predominate over residues 278–293 (SSNSRDNNNNNSNSNN). 3 disordered regions span residues 278–301 (SSNSRDNNNNNSNSNNNGGGGIII), 316–345 (LVENNQEVEPMPEEEEEEEEEEVNQVDNDD), and 389–440 (DIIF…ATTT). Over residues 325–345 (PMPEEEEEEEEEEVNQVDNDD) the composition is skewed to acidic residues. Residues 400–410 (NQHQQQQQQNQ) are compositionally biased toward low complexity. Over residues 411-428 (EIEEEGQEGQEEQEDGTE) the composition is skewed to acidic residues. Residues 429–440 (NENNQGTIATTT) show a composition bias toward low complexity.

The protein is WD40 repeat-containing protein DDB_G0271002 of Dictyostelium discoideum (Social amoeba).